The following is a 156-amino-acid chain: Glutaredoxin-2, mitochondrial (156 aa).

A mitochondrion-targeting transit peptide spans Met1–Ile19. A Glutaredoxin domain is found at Val50–Lys150. A [2Fe-2S] cluster-binding site is contributed by Cys61. Lys67 serves as a coordination point for glutathione. Cys70 carries the S-glutathionyl cysteine; alternate modification. The cysteines at positions 70 and 73 are disulfide-linked. Gln102 and Val114 together coordinate glutathione. Cys146 lines the [2Fe-2S] cluster pocket.

The protein belongs to the glutaredoxin family. In terms of assembly, monomer; active form. Homodimer; inactive form. The homodimer is probably linked by 1 2Fe-2S cluster. In terms of tissue distribution, widely expressed. Highly expressed in testis, and at much lower level in kidney and brain.

The protein localises to the mitochondrion. The protein resides in the nucleus. With respect to regulation, the 2Fe-2S present in the homodimer leads to inactivation of the enzyme. The 2Fe-2S may serve as a redox sensor: the presence of one-electron oxidants or reductants leading to the loss of the 2Fe-2S cluster, subsequent monomerization and activation of the enzyme. Glutathione-dependent oxidoreductase that facilitates the maintenance of mitochondrial redox homeostasis upon induction of apoptosis by oxidative stress. Involved in response to hydrogen peroxide and regulation of apoptosis caused by oxidative stress. Acts as a very efficient catalyst of monothiol reactions because of its high affinity for protein glutathione-mixed disulfides. Can receive electrons not only from glutathione (GSH), but also from thioredoxin reductase supporting both monothiol and dithiol reactions. Efficiently catalyzes both glutathionylation and deglutathionylation of mitochondrial complex I, which in turn regulates the superoxide production by the complex. Overexpression decreases the susceptibility to apoptosis and prevents loss of cardiolipin and cytochrome c release. The protein is Glutaredoxin-2, mitochondrial (Glrx2) of Mus musculus (Mouse).